Consider the following 227-residue polypeptide: UPF0173 metal-dependent hydrolase BALH_4194 (227 aa).

The protein belongs to the UPF0173 family.

The protein is UPF0173 metal-dependent hydrolase BALH_4194 of Bacillus thuringiensis (strain Al Hakam).